Consider the following 190-residue polypeptide: Cypemycin cysteine dehydrogenase (decarboxylating) (190 aa).

It belongs to the HFCD (homooligomeric flavin containing Cys decarboxylase) superfamily.

It carries out the reaction [cypemycin](1-18)-L-Cys-L-Leu-L-Val-L-Cys + A = C(3,19),S(21)-[cypemycin](1-18)-L-Ala-L-Leu-N-thioethenyl-L-valinamide + hydrogen sulfide + AH2 + CO2. In terms of biological role, involved in the biosynthesis of the lanaridin cypemycin. This is Cypemycin cysteine dehydrogenase (decarboxylating) from Streptomyces sp.